The chain runs to 226 residues: Uridylate kinase (226 aa).

9 to 10 (GS) is an ATP binding site. UMP is bound at residue glycine 46. Positions 47 and 51 each coordinate ATP. UMP contacts are provided by residues aspartate 68 and 116-122 (THPGHTT). ATP contacts are provided by threonine 142, asparagine 143, tyrosine 148, and aspartate 151.

It belongs to the UMP kinase family. As to quaternary structure, homohexamer.

The protein resides in the cytoplasm. It catalyses the reaction UMP + ATP = UDP + ADP. It participates in pyrimidine metabolism; CTP biosynthesis via de novo pathway; UDP from UMP (UMPK route): step 1/1. Its activity is regulated as follows. Inhibited by UTP. Catalyzes the reversible phosphorylation of UMP to UDP. The chain is Uridylate kinase from Methanocaldococcus jannaschii (strain ATCC 43067 / DSM 2661 / JAL-1 / JCM 10045 / NBRC 100440) (Methanococcus jannaschii).